Here is a 75-residue protein sequence, read N- to C-terminus: MNKKILLVIFIVTMLIVDEVNSFKFGSFIKRMWRSKLAKKLRAKGKELLRDYANRVLSPEEEAAAPAPVPAKRRR.

The signal sequence occupies residues methionine 1–serine 22.

Belongs to the non-disulfide-bridged peptide (NDBP) superfamily. Long chain multifunctional peptide (group 2) family. In terms of tissue distribution, expressed by the venom gland.

The protein localises to the secreted. In terms of biological role, insecticidal toxin and antimicrobial peptide with potent activity against both Gram-negative and -positive bacteria, as well as against fungi. Acts by disrupting bacterial membrane integrity. Shows broad-spectrum and highly potent bactericidal activities against the Gram-positive bacteria B.cereus, B.megaterium, B.subtilis, M.luteus, S.aureus, S.epidermidis, S.warneri, S.griseus, S.scabiei, S.mutans, S.salivarius, and S.sanguinis. Also exhibits a wide spectrum of activity against the Gram-negative bacteria A.faecalis, E.coli, P.aeruginosa, P.solanacearum, S.enterica, S.marcescens, and S.maltophilia. Also shows antimicrobial activities against the fungal strains Aspergillus flavus, A.fumigatus, A.nidulans, A.niger, Beauveria bassiana, and Saccharomyces cerevisiae. Its antibiotic activity is potentiated by other antibacterial peptides such as MeuNaTxbeta-4. Also induces cytolysis on mice, lizards and birds erythrocytes. This is Meucin-49 from Mesobuthus eupeus (Lesser Asian scorpion).